The following is a 297-amino-acid chain: Formylmethanofuran--tetrahydromethanopterin formyltransferase (297 aa).

The protein belongs to the FTR family. Homotetramer.

The protein localises to the cytoplasm. It carries out the reaction N-formylmethanofuran + 5,6,7,8-tetrahydromethanopterin + H(+) = N(5)-formyl-5,6,7,8-tetrahydromethanopterin + methanofuran. It functions in the pathway one-carbon metabolism; methanogenesis from CO(2); 5,10-methenyl-5,6,7,8-tetrahydromethanopterin from CO(2): step 2/3. In terms of biological role, catalyzes the reversible transfer of a formyl group from formylmethanofuran (formyl-MFR) to tetrahydromethanopterin (H(4)MPT) to produce 5-formyl tetrahydromethanopterin (5-formyl-H(4)MPT) and methanofuran (MFR). In Methanothermobacter thermautotrophicus (strain ATCC 29096 / DSM 1053 / JCM 10044 / NBRC 100330 / Delta H) (Methanobacterium thermoautotrophicum), this protein is Formylmethanofuran--tetrahydromethanopterin formyltransferase.